Reading from the N-terminus, the 120-residue chain is Membrane-anchored ubiquitin-fold protein 4 (120 aa).

Positions V7–C73 constitute a Ubiquitin-like domain. C115 carries the S-palmitoyl cysteine lipid modification. A Cysteine methyl ester modification is found at C117. C117 is lipidated: S-farnesyl cysteine. Positions T118–M120 are cleaved as a propeptide — removed in mature form.

Ubiquitous.

It is found in the cell membrane. Its function is as follows. May serve as docking site to facilitate the association of other proteins to the plasma membrane. This chain is Membrane-anchored ubiquitin-fold protein 4 (MUB4), found in Arabidopsis thaliana (Mouse-ear cress).